The sequence spans 326 residues: Vitamin B12 import system permease protein BtuC (326 aa).

A run of 9 helical transmembrane segments spans residues 15–35 (WLLC…CAGE), 61–81 (LAVL…QALF), 88–108 (PGLL…VLLG), 112–132 (LPNW…TLIL), 146–166 (LLAG…AIYF), 184–204 (GGVD…LLWI), 240–260 (GWMV…GLVI), 274–294 (VLLP…DVVA), and 302–322 (ELPI…WLLL).

This sequence belongs to the binding-protein-dependent transport system permease family. FecCD subfamily. The complex is composed of two ATP-binding proteins (BtuD), two transmembrane proteins (BtuC) and a solute-binding protein (BtuF).

Its subcellular location is the cell inner membrane. In terms of biological role, part of the ABC transporter complex BtuCDF involved in vitamin B12 import. Involved in the translocation of the substrate across the membrane. The chain is Vitamin B12 import system permease protein BtuC from Escherichia coli O8 (strain IAI1).